We begin with the raw amino-acid sequence, 240 residues long: Ornithine decarboxylase antizyme (240 aa).

2 disordered regions span residues 18 to 45 (RSEP…SSAG) and 69 to 95 (DHDR…SSEF). Positions 21–33 (PISSSNRATKRTI) are enriched in polar residues. Over residues 34 to 43 (SSSSSSSSSS) the composition is skewed to low complexity. A compositionally biased stretch (basic and acidic residues) spans 69–84 (DHDRASPLKEYNRKTS). The segment covering 85-95 (IDSTTTASSEF) has biased composition (polar residues).

This sequence belongs to the ODC antizyme family. As to quaternary structure, interacts with ODC1 and thereby sterically blocks ODC homodimerization. Preferentially expressed in adult female midguts.

Its function is as follows. Ornithine decarboxylase (ODC) antizyme protein that negatively regulates ODC activity and intracellular polyamine biosynthesis and uptake in response to increased intracellular polyamine levels. Binds to ODC monomers, inhibiting the assembly of the functional ODC homodimer, and targets the monomers for ubiquitin-independent proteolytic destruction by the 26S proteasome. This chain is Ornithine decarboxylase antizyme (Oda), found in Aedes aegypti (Yellowfever mosquito).